Here is a 328-residue protein sequence, read N- to C-terminus: Phosphate acyltransferase (328 aa).

The protein belongs to the PlsX family. In terms of assembly, homodimer. Probably interacts with PlsY.

It is found in the cytoplasm. It catalyses the reaction a fatty acyl-[ACP] + phosphate = an acyl phosphate + holo-[ACP]. The protein operates within lipid metabolism; phospholipid metabolism. In terms of biological role, catalyzes the reversible formation of acyl-phosphate (acyl-PO(4)) from acyl-[acyl-carrier-protein] (acyl-ACP). This enzyme utilizes acyl-ACP as fatty acyl donor, but not acyl-CoA. In Mycoplasma pneumoniae (strain ATCC 29342 / M129 / Subtype 1) (Mycoplasmoides pneumoniae), this protein is Phosphate acyltransferase.